A 620-amino-acid chain; its full sequence is uncharacterized protein (620 aa).

It belongs to the chlamydial CPn_0512/CT_425/TC_0708 family.

This is an uncharacterized protein from Chlamydia pneumoniae (Chlamydophila pneumoniae).